The following is a 244-amino-acid chain: tRNA (guanine-N(7)-)-methyltransferase (244 aa).

Glu42, Asp67, Asp94, and Asp116 together coordinate S-adenosyl-L-methionine. Asp116 is a catalytic residue. Substrate is bound by residues Lys120, Asp150, and 191 to 194 (TYYE).

This sequence belongs to the class I-like SAM-binding methyltransferase superfamily. TrmB family.

The enzyme catalyses guanosine(46) in tRNA + S-adenosyl-L-methionine = N(7)-methylguanosine(46) in tRNA + S-adenosyl-L-homocysteine. The protein operates within tRNA modification; N(7)-methylguanine-tRNA biosynthesis. Its function is as follows. Catalyzes the formation of N(7)-methylguanine at position 46 (m7G46) in tRNA. The sequence is that of tRNA (guanine-N(7)-)-methyltransferase from Porphyromonas gingivalis (strain ATCC BAA-308 / W83).